Here is a 155-residue protein sequence, read N- to C-terminus: Cytochrome c-type biogenesis protein CcmE (155 aa).

Residues 1–7 lie on the Cytoplasmic side of the membrane; sequence MTRKQKR. A helical; Signal-anchor for type II membrane protein transmembrane segment spans residues 8 to 28; the sequence is LVVIAGGMSFILAAVLLVMFA. At 29–155 the chain is on the periplasmic side; the sequence is FSQSVAYFYM…GKGQEAKATP (127 aa). 2 residues coordinate heme: H124 and Y128.

Belongs to the CcmE/CycJ family.

The protein localises to the cell inner membrane. Heme chaperone required for the biogenesis of c-type cytochromes. Transiently binds heme delivered by CcmC and transfers the heme to apo-cytochromes in a process facilitated by CcmF and CcmH. This Rhizobium etli (strain ATCC 51251 / DSM 11541 / JCM 21823 / NBRC 15573 / CFN 42) protein is Cytochrome c-type biogenesis protein CcmE.